The primary structure comprises 153 residues: Protein ripply2.2 (153 aa).

A WRPW motif; required for transcriptional repression and interaction with tle4 motif is present at residues Trp-58 to Trp-61. Residues His-93 to Tyr-128 are ripply homology domain. The segment at Leu-127–Glu-153 is disordered. Residues Ser-131–Glu-153 show a composition bias toward acidic residues.

Belongs to the ripply family. Interacts with tle4 and tbx6, and mediates interaction between these proteins. As to expression, expressed in the presomitic mesoderm (PSM) in the anterior halves of somitomeres S-I, S-II and S-III.

It is found in the nucleus. Its function is as follows. Required during somitogenesis for the formation of somite boundaries. Represses the expression of genes involved in somite segmentation by acting with the corepressor tle4 to down-regulate the transcriptional activity of tbx6. May act by regulating the activity of tle4. Represses transcription of delta2, thy1 and ripply2.2/bowline itself. This is Protein ripply2.2 (ripply2.2) from Xenopus laevis (African clawed frog).